Reading from the N-terminus, the 168-residue chain is Nicotinamide-nucleotide adenylyltransferase (168 aa).

It belongs to the archaeal NMN adenylyltransferase family.

It localises to the cytoplasm. It catalyses the reaction beta-nicotinamide D-ribonucleotide + ATP + H(+) = diphosphate + NAD(+). Its pathway is cofactor biosynthesis; NAD(+) biosynthesis; NAD(+) from nicotinamide D-ribonucleotide: step 1/1. This chain is Nicotinamide-nucleotide adenylyltransferase, found in Methanosphaerula palustris (strain ATCC BAA-1556 / DSM 19958 / E1-9c).